Consider the following 2280-residue polypeptide: MRGHQFKSWIFELREILREIKNSHHFLDSWTQFNSVGSFIHIFFHQERFLKLFDPRIWSILLSRNSQGSTSNRYFTIKGVILFVVAVLIYRINNRNMVERKNLYLIGLLPIPMNSIGPRNDTLEESVGSSNINRLIVSLLYLPKGKKISESCFLNPKESTWVLPITKKCSMPESNWGSRWWRNWIGKKRDSSCKISNETVAGIEILFKEKDLKYLEFLFVYYMDDPIRKDHDWELFDRLSLRKSRNRINLNSGPLFEILVKHWISYLMSAFREKIPIEVEGFFKQQGAGSTIQSNDIEHVSHLFSRNKWAISLQNCAQFHMWQFRQDLFVSWGKNPPESDFLRNVSRENWIWLDNVWLVNKDRFFSKVQNVSSNIQYDSTRSSFVQVTDSSQLKGSSDQSRDHLDSISNEDSEYHTLINQREIQQRKERSILWDPSFLQTERKEIESGRFPKCLSGYSSMSRLFTEREKQMINHLFPEEIEEFLGNPTRSVRSFFSDRWSELHLGSNPTERSTRDQKLLKKQQDLSFVPSRRSENKEMVNIFKIITYLQNTVSIHPISSDPGCDMVPKDEPDMDSSNKISFLNKNPFFDLFHLFHDRNRGGYTLHYDFESEERFQEMADLFTLSITEPDLVYHKGFAFSIDSCGLDQKQFLNEARDESKKKSLLVLPPIFYEENESFSRRIRKKWVRISCGNDLEDPKPKIVVFASNNIMEAVTQYRLIRNLIQIQYSTYGYIRNVLNRFFLMNRSDRNFEYGIQRDQIGKDTLNHRTIMKYTINQYLSNLKKSQKKWFEPLILISRTERSMNRDPDAYRYKWSNGSKNFQEHLEQSVSEQKSRFQVVFDRLRINQYSIDWSEVIDKKDLSKPLRFFLSKSLLFLSKLLFFLSNSLPFFCVSFGNIPIHRSEIYIYELKGPNDQLCNQLLESIGLQIVHLKKWKPFLLDDHDTSQKSKFLINGGTISPFLFNKIPKWMIDSFHTRNNRRKSFDNPDSYFSMIFHDQDNWLNPVKPFHRSSLISSFYKANRLRFLNNPHHFCFYWNTRFPFSVEKPRINNSDFTYGQFLNILFIRNKIFSLCVGKKKHAFWGRDTISPIESQVSNIFIPNDFPQSGDETYNLYKSFHFPSRSDPFVRRAIYSIADISGTPLTEGQIVNFERTYCQPLSDMNLSDSEGKNLHQYLNFNSNMGLIHTPCSEKDLSSEKRKKRSLCLKKCVEKGQMYRTFQRDSAFSTLSKWNLFQTYMPWFLTSTGYKYLNFIFLDTFSDLLPILSSSQKFVSIFHDIMHGSGISWRILQKKLCLPQWNLISEISSKCLHNLLLSEEMIHRNNESSLISTHLRSPNAREFLYSILFLLLVAGYLVRTHLLFVSRASSELQTEFEKVKSLMIPSSMIELRKLLDRYPTSEPNSFWLKNLFLVALEQLGDSLEEIRGSASGGNMLGPAYGVKSIRSKKKDWNINLIEIIDLIPNPINRITFSRNTRHLSHTSKEIYSLIRKRKNVNGDWIDDKIESWVANSDSIDDEEREFLVQFSTLTTENRIDQILLSLTHSDRLSKNDSGYQMIEQPGAIYLRYLVDIHKKHLMNYEFNPSCLAERRIFLAHYQTITYSQTSCGENSFHFPSHGKPFSLRLALSPSRGILVIGSIGTGRSYLVKYLATNSYVPFITVFLNKFLDNKPKGFLLDEIDIDDSDDIDDSANLDASDDIDRDLDTELELLTRMNGLTMDMMPEIDRFYITLQFELAKAMSPCIIWIPNIHDLDVNESNDLALGLLVNHLSRDCERCSTRNILVIASTHIPQKVDPALIAPNKLNTCIKIRRLLLPQQRKHFFTLSYTRGFHLEKKMFHTNGFGSITMGSNARDLVALTNEVLSISITQKKSIIDTNTIRSALHRQTWDLRSQVRSVQDHGILFYQIGRAVAQNVLLSNCPIDPISIYMKKKSCNEGDSYLYKWYFELGTSMKRLTILLYLLSCSAGSVAQDLWSLSGPDEKNGITSYGLVENDSDLVHGLLEVEGALVGSSRTEKDCSQFDNDRVTLLLRPEPRNPLDMMQNGSCSILDQRFLYEKYESEFEEGEGEGALDPQEDLFNHIVWAPRIWRPWGFLFDCIERPNELGFPYWSRSFRGKRIIYDEEDELQENDSEFLQSGTMQYQTRDRSSKEQGLFRISQFIWDPADPLFFLFKDQPPGSVFSHRELFADEEMSKGLLTSQTDPPTSIYKRWFIKNTQEKHFELLINRQRWLRTNSSLSNGSFRSNTLSESYQYLSNLFLSNGTLLDQMTKTLLRKRWLFPDEMKIGFM.

ATP is bound at residue 1631–1638 (GSIGTGRS).

This sequence belongs to the Ycf2 family.

Its subcellular location is the plastid. It is found in the chloroplast stroma. In terms of biological role, probable ATPase of unknown function. Its presence in a non-photosynthetic plant (Epifagus virginiana) and experiments in tobacco indicate that it has an essential function which is probably not related to photosynthesis. The sequence is that of Protein Ycf2 from Nicotiana tomentosiformis (Tobacco).